A 224-amino-acid chain; its full sequence is 7-cyano-7-deazaguanine synthase (224 aa).

11–21 (FSGGQDSTTCL) provides a ligand contact to ATP. Cysteine 190, cysteine 199, cysteine 202, and cysteine 205 together coordinate Zn(2+).

It belongs to the QueC family. It depends on Zn(2+) as a cofactor.

It carries out the reaction 7-carboxy-7-deazaguanine + NH4(+) + ATP = 7-cyano-7-deazaguanine + ADP + phosphate + H2O + H(+). It participates in purine metabolism; 7-cyano-7-deazaguanine biosynthesis. Functionally, catalyzes the ATP-dependent conversion of 7-carboxy-7-deazaguanine (CDG) to 7-cyano-7-deazaguanine (preQ(0)). In Parabacteroides distasonis (strain ATCC 8503 / DSM 20701 / CIP 104284 / JCM 5825 / NCTC 11152), this protein is 7-cyano-7-deazaguanine synthase.